We begin with the raw amino-acid sequence, 125 residues long: Large ribosomal subunit protein uL22c (125 aa).

Belongs to the universal ribosomal protein uL22 family. As to quaternary structure, part of the 50S ribosomal subunit.

It localises to the plastid. The protein resides in the chloroplast. In terms of biological role, this protein binds specifically to 23S rRNA. Its function is as follows. The globular domain of the protein is located near the polypeptide exit tunnel on the outside of the subunit, while an extended beta-hairpin is found that lines the wall of the exit tunnel in the center of the 70S ribosome. This Nymphaea alba (White water-lily) protein is Large ribosomal subunit protein uL22c (rpl22).